Here is a 796-residue protein sequence, read N- to C-terminus: Lon protease 2 (796 aa).

Residues 9–206 (LPIVILKENV…KLIVNLSIEI (198 aa)) enclose the Lon N-terminal domain. 352 to 359 (GPPGIGKT) lines the ATP pocket. A Lon proteolytic domain is found at 617–796 (IDSSGFVYGL…EEVFDYLNII (180 aa)). Catalysis depends on residues S702 and K745.

Belongs to the peptidase S16 family. Homohexamer. Organized in a ring with a central cavity.

It localises to the cytoplasm. It catalyses the reaction Hydrolysis of proteins in presence of ATP.. Its function is as follows. ATP-dependent serine protease that mediates the selective degradation of mutant and abnormal proteins as well as certain short-lived regulatory proteins. Required for cellular homeostasis and for survival from DNA damage and developmental changes induced by stress. Degrades polypeptides processively to yield small peptide fragments that are 5 to 10 amino acids long. Binds to DNA in a double-stranded, site-specific manner. This chain is Lon protease 2 (lon2), found in Borreliella burgdorferi (strain ATCC 35210 / DSM 4680 / CIP 102532 / B31) (Borrelia burgdorferi).